The following is a 565-amino-acid chain: Thiol:disulfide interchange protein DsbD (565 aa).

An N-terminal signal peptide occupies residues 1-19 (MAQRIFTLILLLCSTSVFA). Disulfide bonds link cysteine 122–cysteine 128 and cysteine 182–cysteine 304. Transmembrane regions (helical) follow at residues 163–183 (LPFSALWALLIGIGIAFTPCV), 208–228 (LLTFIYVQGMALTYTALGLVV), 243–263 (YVLIGLAIVFTLLAMSMFGLF), 296–316 (IAGLICSPCTTAPLSAILLYI), 323–343 (WLGGGTLYLYALGMGLPLMLI), 357–377 (WMEQVKTAFGFVILALPVFLL), and 384–404 (VWGLRLWSALGVAFFGWAFIT). One can recognise a Thioredoxin domain in the interval 434–565 (WAFGATHTAQ…FSAHLRDRQP (132 aa)). An intrachain disulfide couples cysteine 480 to cysteine 483.

The protein belongs to the thioredoxin family. DsbD subfamily.

The protein resides in the cell inner membrane. The catalysed reaction is [protein]-dithiol + NAD(+) = [protein]-disulfide + NADH + H(+). The enzyme catalyses [protein]-dithiol + NADP(+) = [protein]-disulfide + NADPH + H(+). Its function is as follows. Required to facilitate the formation of correct disulfide bonds in some periplasmic proteins and for the assembly of the periplasmic c-type cytochromes. Acts by transferring electrons from cytoplasmic thioredoxin to the periplasm. This transfer involves a cascade of disulfide bond formation and reduction steps. This Shigella flexneri serotype 5b (strain 8401) protein is Thiol:disulfide interchange protein DsbD.